A 460-amino-acid polypeptide reads, in one-letter code: Argininosuccinate lyase (460 aa).

Belongs to the lyase 1 family. Argininosuccinate lyase subfamily.

The protein localises to the cytoplasm. It catalyses the reaction 2-(N(omega)-L-arginino)succinate = fumarate + L-arginine. It functions in the pathway amino-acid biosynthesis; L-arginine biosynthesis; L-arginine from L-ornithine and carbamoyl phosphate: step 3/3. This chain is Argininosuccinate lyase, found in Alkaliphilus metalliredigens (strain QYMF).